A 963-amino-acid polypeptide reads, in one-letter code: Bifunctional glutamine synthetase adenylyltransferase/adenylyl-removing enzyme (963 aa).

Residues 1–453 (MLTTLIPLSQ…IFNEIIGEEE (453 aa)) form an adenylyl removase region. Residues 461–963 (VNEKLAEWKD…VREMWQRLLA (503 aa)) are adenylyl transferase.

The protein belongs to the GlnE family. Mg(2+) serves as cofactor.

The enzyme catalyses [glutamine synthetase]-O(4)-(5'-adenylyl)-L-tyrosine + phosphate = [glutamine synthetase]-L-tyrosine + ADP. It carries out the reaction [glutamine synthetase]-L-tyrosine + ATP = [glutamine synthetase]-O(4)-(5'-adenylyl)-L-tyrosine + diphosphate. Functionally, involved in the regulation of glutamine synthetase GlnA, a key enzyme in the process to assimilate ammonia. When cellular nitrogen levels are high, the C-terminal adenylyl transferase (AT) inactivates GlnA by covalent transfer of an adenylyl group from ATP to specific tyrosine residue of GlnA, thus reducing its activity. Conversely, when nitrogen levels are low, the N-terminal adenylyl removase (AR) activates GlnA by removing the adenylyl group by phosphorolysis, increasing its activity. The regulatory region of GlnE binds the signal transduction protein PII (GlnB) which indicates the nitrogen status of the cell. The sequence is that of Bifunctional glutamine synthetase adenylyltransferase/adenylyl-removing enzyme from Mannheimia haemolytica (Pasteurella haemolytica).